We begin with the raw amino-acid sequence, 287 residues long: MAGAKEIRSKIASVQNTQKITKAMEMVAASKMRKSQDRMAASRPYADTMRKVIGHLATGNLEYKHPYLEERDVKRVGYLVVSTDRGLCGGLNINLFKKLLADMKAWSDKGVQCDIAMIGSKGVSFFNSVGGNIVAQVTGMGDNPSLSDLIGPVKVMLQAYDEGRLDKLYVVSNKFINTMSQAPTITQLLPLPASEDDELKHKSWDYLYEPDPKALLDTLLRRYVESQVYQGVVENLASEQAARMVAMKAATDNGGSLIKELQLVYNKARQASITQELTEIVSGAAAV.

The protein belongs to the ATPase gamma chain family. In terms of assembly, F-type ATPases have 2 components, CF(1) - the catalytic core - and CF(0) - the membrane proton channel. CF(1) has five subunits: alpha(3), beta(3), gamma(1), delta(1), epsilon(1). CF(0) has three main subunits: a, b and c.

The protein resides in the cell inner membrane. Produces ATP from ADP in the presence of a proton gradient across the membrane. The gamma chain is believed to be important in regulating ATPase activity and the flow of protons through the CF(0) complex. The sequence is that of ATP synthase gamma chain from Cronobacter sakazakii (strain ATCC BAA-894) (Enterobacter sakazakii).